A 333-amino-acid chain; its full sequence is Fructose-1,6-bisphosphatase class 1 (333 aa).

Residues E89, D112, L114, and D115 each coordinate Mg(2+). Substrate is bound by residues 115–118 (DGSS), N208, Y241, and K271. E277 contacts Mg(2+).

This sequence belongs to the FBPase class 1 family. In terms of assembly, homotetramer. The cofactor is Mg(2+).

The protein localises to the cytoplasm. It carries out the reaction beta-D-fructose 1,6-bisphosphate + H2O = beta-D-fructose 6-phosphate + phosphate. The protein operates within carbohydrate biosynthesis; gluconeogenesis. The protein is Fructose-1,6-bisphosphatase class 1 of Haemophilus influenzae (strain ATCC 51907 / DSM 11121 / KW20 / Rd).